The following is a 167-amino-acid chain: MARVAVLVAGAVLAFLLAATNVTAKRWTVGDNKFWNPNINYTIWAQDKHFYLDDWLYFVYERNQYNVIEVNETNYISCNPNNPIANWSRGAGRDLVHLNVTRHYYLISGNGGGCYGGMKLAVLVEKPPPPPAAAPNKNSARRTFSVSGFAYQFLIPVAVFAAVGTRY.

The N-terminal stretch at 1-24 is a signal peptide; that stretch reads MARVAVLVAGAVLAFLLAATNVTA. Residues 25 to 126 enclose the Phytocyanin domain; it reads KRWTVGDNKF…GMKLAVLVEK (102 aa). Residues Asn-40, Asn-71, Asn-86, and Asn-99 are each glycosylated (N-linked (GlcNAc...) asparagine). Residues Cys-78 and Cys-114 are joined by a disulfide bond. Asn-138 carries GPI-anchor amidated asparagine lipidation. Positions 139–167 are cleaved as a propeptide — removed in mature form; that stretch reads SARRTFSVSGFAYQFLIPVAVFAAVGTRY.

Belongs to the early nodulin-like (ENODL) family.

It localises to the cell membrane. Functionally, may act as a carbohydrate transporter. This chain is Early nodulin-like protein 16, found in Arabidopsis thaliana (Mouse-ear cress).